Consider the following 55-residue polypeptide: ATP synthase F(0) complex subunit 8 (55 aa).

A helical membrane pass occupies residues 4-24 (LNPSPWFIILLFSWVIFMVIL).

Belongs to the ATPase protein 8 family. Component of the ATP synthase complex composed at least of ATP5F1A/subunit alpha, ATP5F1B/subunit beta, ATP5MC1/subunit c (homooctomer), MT-ATP6/subunit a, MT-ATP8/subunit 8, ATP5ME/subunit e, ATP5MF/subunit f, ATP5MG/subunit g, ATP5MK/subunit k, ATP5MJ/subunit j, ATP5F1C/subunit gamma, ATP5F1D/subunit delta, ATP5F1E/subunit epsilon, ATP5PF/subunit F6, ATP5PB/subunit b, ATP5PD/subunit d, ATP5PO/subunit OSCP. ATP synthase complex consists of a soluble F(1) head domain (subunits alpha(3) and beta(3)) - the catalytic core - and a membrane F(0) domain - the membrane proton channel (subunits c, a, 8, e, f, g, k and j). These two domains are linked by a central stalk (subunits gamma, delta, and epsilon) rotating inside the F1 region and a stationary peripheral stalk (subunits F6, b, d, and OSCP).

The protein resides in the mitochondrion membrane. Functionally, subunit 8, of the mitochondrial membrane ATP synthase complex (F(1)F(0) ATP synthase or Complex V) that produces ATP from ADP in the presence of a proton gradient across the membrane which is generated by electron transport complexes of the respiratory chain. ATP synthase complex consist of a soluble F(1) head domain - the catalytic core - and a membrane F(1) domain - the membrane proton channel. These two domains are linked by a central stalk rotating inside the F(1) region and a stationary peripheral stalk. During catalysis, ATP synthesis in the catalytic domain of F(1) is coupled via a rotary mechanism of the central stalk subunits to proton translocation. In vivo, can only synthesize ATP although its ATP hydrolase activity can be activated artificially in vitro. Part of the complex F(0) domain. This chain is ATP synthase F(0) complex subunit 8, found in Scyliorhinus canicula (Small-spotted catshark).